A 180-amino-acid chain; its full sequence is Large ribosomal subunit protein uL5 (180 aa).

Belongs to the universal ribosomal protein uL5 family. As to quaternary structure, part of the 50S ribosomal subunit; part of the 5S rRNA/L5/L18/L25 subcomplex. Contacts the 5S rRNA and the P site tRNA. Forms a bridge to the 30S subunit in the 70S ribosome.

Its function is as follows. This is one of the proteins that bind and probably mediate the attachment of the 5S RNA into the large ribosomal subunit, where it forms part of the central protuberance. In the 70S ribosome it contacts protein S13 of the 30S subunit (bridge B1b), connecting the 2 subunits; this bridge is implicated in subunit movement. Contacts the P site tRNA; the 5S rRNA and some of its associated proteins might help stabilize positioning of ribosome-bound tRNAs. The polypeptide is Large ribosomal subunit protein uL5 (Synechococcus sp. (strain JA-2-3B'a(2-13)) (Cyanobacteria bacterium Yellowstone B-Prime)).